A 149-amino-acid polypeptide reads, in one-letter code: Nucleoside diphosphate kinase (149 aa).

Lys9, Phe57, Arg85, Thr91, Arg102, and Asn112 together coordinate ATP. The active-site Pros-phosphohistidine intermediate is the His115.

It belongs to the NDK family. In terms of assembly, homotetramer. Mg(2+) serves as cofactor.

Its subcellular location is the cytoplasm. The catalysed reaction is a 2'-deoxyribonucleoside 5'-diphosphate + ATP = a 2'-deoxyribonucleoside 5'-triphosphate + ADP. It carries out the reaction a ribonucleoside 5'-diphosphate + ATP = a ribonucleoside 5'-triphosphate + ADP. In terms of biological role, major role in the synthesis of nucleoside triphosphates other than ATP. The ATP gamma phosphate is transferred to the NDP beta phosphate via a ping-pong mechanism, using a phosphorylated active-site intermediate. This Nostoc punctiforme (strain ATCC 29133 / PCC 73102) protein is Nucleoside diphosphate kinase.